The sequence spans 1560 residues: uncharacterized protein (1560 aa).

Positions methionine 1–asparagine 46 are disordered. The span at phenylalanine 15–aspartate 28 shows a compositional bias: acidic residues. The segment covering aspartate 29–asparagine 46 has biased composition (basic and acidic residues). Coiled-coil stretches lie at residues aspartate 36–asparagine 60 and lysine 317–asparagine 359. The tract at residues lysine 568–tyrosine 594 is disordered. The segment covering asparagine 583–tyrosine 594 has biased composition (low complexity). Residues aspartate 1188–asparagine 1239 are a coiled coil. 2 helical membrane passes run leucine 1271 to leucine 1291 and leucine 1314 to serine 1334.

It is found in the membrane. This is an uncharacterized protein from Plasmodium falciparum (isolate 3D7).